The chain runs to 397 residues: 2-oxoglutarate and iron-dependent oxygenase domain-containing protein ICU11 (397 aa).

A disordered region spans residues 1 to 56 (MCNQTPLRSMALDSSGKQPEQQQQQQPRASSGNGEARLKLRRTPNEEHEPENYEDL). Over residues 18–27 (QPEQQQQQQP) the composition is skewed to low complexity. Residues 238-339 (SLDSHHGYIV…RANLILWCRS (102 aa)) form the Fe2OG dioxygenase domain. Fe cation-binding residues include histidine 260, aspartate 262, and histidine 320. Arginine 330 lines the 2-oxoglutarate pocket.

It depends on Fe(2+) as a cofactor. L-ascorbate serves as cofactor. As to expression, expressed in roots, cotyledons, rosette leaves, cauline leaves and inflorescences.

Its subcellular location is the nucleus. The protein resides in the nucleoplasm. Its function is as follows. Participates in the epigenetic repression of flowering genes in association with CP2. Functions in the repression of several members of the MADS-box transcription factors family, including SEP3, during vegetative development via histone modification. This is 2-oxoglutarate and iron-dependent oxygenase domain-containing protein ICU11 from Arabidopsis thaliana (Mouse-ear cress).